The primary structure comprises 621 residues: E3 SUMO-protein ligase PIAS2 (621 aa).

Positions 11-45 (VSSFRVSELQVLLGFAGRNKSGRKHDLLMRALHLL) constitute an SAP domain. The short motif at 19–23 (LQVLL) is the LXXLL motif element. Residues Lys-46 and Lys-249 each participate in a glycyl lysine isopeptide (Lys-Gly) (interchain with G-Cter in SUMO2) cross-link. The region spanning 134-299 (QPSPPIPPVH…SMSVYLVRQL (166 aa)) is the PINIT domain. The SP-RING-type zinc finger occupies 331–412 (PDSEIATTSL…FMEILNDCSD (82 aa)). Residues Cys-362, His-364, Cys-385, and Cys-388 each coordinate Zn(2+). Glycyl lysine isopeptide (Lys-Gly) (interchain with G-Cter in SUMO2) cross-links involve residues Lys-430, Lys-435, Lys-443, and Lys-452. Residues 467-473 (IDVIDLT) form an SUMO1-binding region. 3 positions are modified to phosphoserine: Ser-476, Ser-477, and Ser-478. Residues 484-492 (PPAKRKCIF) carry the Nuclear localization signal motif. Lys-489 is covalently cross-linked (Glycyl lysine isopeptide (Lys-Gly) (interchain with G-Cter in SUMO2)). The residue at position 499 (Ser-499) is a Phosphoserine. A Glycyl lysine isopeptide (Lys-Gly) (interchain with G-Cter in SUMO2) cross-link involves residue Lys-502. Residues 577-610 (TASSTSVTTTSPHESSTHVSSSSSRSETGVITSS) show a composition bias toward low complexity. The segment at 577–621 (TASSTSVTTTSPHESSTHVSSSSSRSETGVITSSGRNIPDIISLD) is disordered.

This sequence belongs to the PIAS family. In terms of assembly, binds SUMO1 and UBE2I. Interacts with AXIN1, JUN, MDM2, PARK7, TP53 and TP73 isoform alpha, but not TP73 isoform beta. Interacts with STAT4 following IL12 and IFN-alpha stimulation of T-cells. Interacts also with GTF2I, GTF2IRD1, IKFZ1, DAB2 and MSX2, as well as with several steroid receptors, including ESR1, ESR2, NR3C1, PGR, AR, and with NCOA2. Sumoylation of a target protein seems to enhance the interaction. Binds to sumoylated ELK1. Interacts with PLAG1. Binds DNA, such as CDKN1A promoter, in a sequence-specific manner. Interacts with KLF8; the interaction results in SUMO ligation and repression of KLF8 transcriptional activity and of its cell cycle progression into G(1) phase. Interacts with IFIH1/MDA5. Interacts with PML. Interacts with PRDM1. In terms of processing, sumoylated.

It localises to the nucleus speckle. The protein resides in the nucleus. The protein localises to the PML body. The enzyme catalyses S-ubiquitinyl-[E2 ubiquitin-conjugating enzyme]-L-cysteine + [acceptor protein]-L-lysine = [E2 ubiquitin-conjugating enzyme]-L-cysteine + N(6)-ubiquitinyl-[acceptor protein]-L-lysine.. The protein operates within protein modification; protein sumoylation. Its function is as follows. Functions as an E3-type small ubiquitin-like modifier (SUMO) ligase, stabilizing the interaction between UBE2I and the substrate, and as a SUMO-tethering factor. Plays a crucial role as a transcriptional coregulation in various cellular pathways, including the STAT pathway, the p53 pathway and the steroid hormone signaling pathway. The effects of this transcriptional coregulation, transactivation or silencing may vary depending upon the biological context and PIAS2 isoform studied. However, it seems to be mostly involved in gene silencing. Binds to sumoylated ELK1 and enhances its transcriptional activity by preventing recruitment of HDAC2 by ELK1, thus reversing SUMO-mediated repression of ELK1 transactivation activity. Isoform PIASx-beta, but not isoform PIASx-alpha, promotes MDM2 sumoylation. Isoform PIASx-alpha promotes PARK7 sumoylation. Isoform PIASx-beta promotes NCOA2 sumoylation more efficiently than isoform PIASx-alpha. Sumoylates PML at'Lys-65' and 'Lys-160'. This Mus musculus (Mouse) protein is E3 SUMO-protein ligase PIAS2 (Pias2).